Reading from the N-terminus, the 44-residue chain is MDSPAFFFTIFLWCLLLSITGYSIYVGFGPPSQQLRDPFEEHED.

The helical transmembrane segment at 6–26 (FFFTIFLWCLLLSITGYSIYV) threads the bilayer.

The protein belongs to the PsbN family.

It is found in the plastid. The protein resides in the chloroplast thylakoid membrane. Its function is as follows. May play a role in photosystem I and II biogenesis. The sequence is that of Protein PsbN from Chlorella vulgaris (Green alga).